The sequence spans 141 residues: Hemoglobin subunit alpha-3 (141 aa).

A Globin domain is found at 1–141 (VLSPADKTNV…VSTVLTSKYR (141 aa)). His58 provides a ligand contact to O2. His87 serves as a coordination point for heme b.

Belongs to the globin family. As to quaternary structure, heterotetramer of two alpha chains and two beta chains. In terms of tissue distribution, red blood cells.

Functionally, involved in oxygen transport from the lung to the various peripheral tissues. The protein is Hemoglobin subunit alpha-3 of Pan troglodytes (Chimpanzee).